A 108-amino-acid chain; its full sequence is Peptidyl-prolyl cis-trans isomerase FKBP1B (108 aa).

Residues 20-108 (GQICVVHYTG…IFDVELLSLE (89 aa)) form the PPIase FKBP-type domain.

Belongs to the FKBP-type PPIase family. FKBP1 subfamily. In terms of assembly, identified in a complex composed of RYR2, FKBP1B, PKA catalytic subunit, PRKAR2A, AKAP6, and the protein phosphatases PP2A and PP1. Interacts directly with RYR2.

Its subcellular location is the cytoplasm. The protein localises to the sarcoplasmic reticulum. The enzyme catalyses [protein]-peptidylproline (omega=180) = [protein]-peptidylproline (omega=0). With respect to regulation, inhibited by both FK506 and rapamycin. Has the potential to contribute to the immunosuppressive and toxic effects of FK506 and rapamycin. PPIases accelerate the folding of proteins. It catalyzes the cis-trans isomerization of proline imidic peptide bonds in oligopeptides. This Mus musculus (Mouse) protein is Peptidyl-prolyl cis-trans isomerase FKBP1B (Fkbp1b).